The chain runs to 352 residues: Protein O-mannose kinase (352 aa).

Over Met-1 to Cys-16 the chain is Cytoplasmic. Residues Leu-17–Met-37 traverse the membrane as a helical; Signal-anchor for type II membrane protein segment. Residues Tyr-38 to Leu-352 are Lumenal-facing. The Protein kinase domain maps to Val-82–Leu-352.

It belongs to the protein kinase superfamily. Ser/Thr protein kinase family. STKL subfamily.

The protein localises to the endoplasmic reticulum membrane. The catalysed reaction is 3-O-[beta-D-GalNAc-(1-&gt;3)-beta-D-GlcNAc-(1-&gt;4)-alpha-D-Man]-L-Thr-[protein] + ATP = 3-O-[beta-D-GalNAc-(1-&gt;3)-beta-D-GlcNAc-(1-&gt;4)-(O-6-P-alpha-D-Man)]-Thr-[protein] + ADP + H(+). Its function is as follows. Protein O-mannose kinase that specifically mediates phosphorylation at the 6-position of an O-mannose of the trisaccharide (N-acetylgalactosamine (GalNAc)-beta-1,3-N-acetylglucosamine (GlcNAc)-beta-1,4-mannose) to generate phosphorylated O-mannosyl trisaccharide (N-acetylgalactosamine-beta-1,3-N-acetylglucosamine-beta-1,4-(phosphate-6-)mannose). Phosphorylated O-mannosyl trisaccharide is a carbohydrate structure present in alpha-dystroglycan (dag1), which is required for binding laminin G-like domain-containing extracellular proteins with high affinity. Only shows kinase activity when the GalNAc-beta-3-GlcNAc-beta-terminus is linked to the 4-position of O-mannose, suggesting that this disaccharide serves as the substrate recognition motif. This Xenopus laevis (African clawed frog) protein is Protein O-mannose kinase (pomk).